The following is a 374-amino-acid chain: Cell division protein DivIB (374 aa).

The tract at residues 1–90 is disordered; sequence MWKISNENDI…EEEHFADRLP (90 aa). Residues 1–103 lie on the Cytoplasmic side of the membrane; the sequence is MWKISNENDI…KTRNKRLYRR (103 aa). Positions 39–53 are enriched in basic and acidic residues; the sequence is YLKKQAEEAASKGEN. A compositionally biased stretch (polar residues) spans 56-75; it reads AEVTITLQEQSQEEPQQHLP. A helical membrane pass occupies residues 104-124; the sequence is LAFILTCLGTAILVALYFVSP. At 125–374 the chain is on the extracellular side; the sequence is LSRLSEVTVS…GENQEVQQAE (250 aa). The 72-residue stretch at 126-197 folds into the POTRA domain; it reads SRLSEVTVSG…NSFKIDIQEY (72 aa). The tract at residues 325-374 is disordered; that stretch reads KESEETGSEVSEDSAVENQEVVDPNAGVATDGANNGTPTNGENQEVQQAE. Over residues 326-339 the composition is skewed to acidic residues; it reads ESEETGSEVSEDSA. The segment covering 356–374 has biased composition (polar residues); the sequence is GANNGTPTNGENQEVQQAE.

This sequence belongs to the FtsQ/DivIB family. DivIB subfamily.

Its subcellular location is the cell membrane. In terms of biological role, cell division protein that may be involved in stabilizing or promoting the assembly of the division complex. The protein is Cell division protein DivIB of Enterococcus faecalis (strain 62).